The chain runs to 428 residues: 3-phosphoshikimate 1-carboxyvinyltransferase (428 aa).

The 3-phosphoshikimate site is built by lysine 21, serine 22, and arginine 26. Lysine 21 provides a ligand contact to phosphoenolpyruvate. Positions 91 and 119 each coordinate phosphoenolpyruvate. Residues serine 164, glutamine 166, aspartate 313, and lysine 340 each contribute to the 3-phosphoshikimate site. Glutamine 166 contributes to the phosphoenolpyruvate binding site. The active-site Proton acceptor is aspartate 313. Phosphoenolpyruvate-binding residues include arginine 344 and arginine 386.

It belongs to the EPSP synthase family. In terms of assembly, monomer.

The protein localises to the cytoplasm. The catalysed reaction is 3-phosphoshikimate + phosphoenolpyruvate = 5-O-(1-carboxyvinyl)-3-phosphoshikimate + phosphate. The protein operates within metabolic intermediate biosynthesis; chorismate biosynthesis; chorismate from D-erythrose 4-phosphate and phosphoenolpyruvate: step 6/7. Catalyzes the transfer of the enolpyruvyl moiety of phosphoenolpyruvate (PEP) to the 5-hydroxyl of shikimate-3-phosphate (S3P) to produce enolpyruvyl shikimate-3-phosphate and inorganic phosphate. This chain is 3-phosphoshikimate 1-carboxyvinyltransferase, found in Campylobacter jejuni subsp. jejuni serotype O:2 (strain ATCC 700819 / NCTC 11168).